Here is a 351-residue protein sequence, read N- to C-terminus: uncharacterized protein (351 aa).

The signal sequence occupies residues 1-27 (MKNKKRVLIASSLSCAILLLSAATTQA). The segment at 28–71 (NSAHKDSQDQNKKEHVDKSQQKDKRNVTNKDKNSTVPDDIGKNG) is disordered. Positions 30–60 (AHKDSQDQNKKEHVDKSQQKDKRNVTNKDKN) are enriched in basic and acidic residues.

It belongs to the aerolysin family.

This is an uncharacterized protein from Staphylococcus aureus (strain N315).